Consider the following 590-residue polypeptide: Type I inositol polyphosphate 5-phosphatase 1 (590 aa).

The tract at residues 47–73 (DYSADSDDDYEDRSQEFDPISSGVTNP) is disordered. Positions 48–57 (YSADSDDDYE) are enriched in acidic residues. Ser60 is modified (phosphoserine). 2 catalytic regions span residues 445-460 (ERII…INLS) and 523-538 (GKRR…WNGK).

It belongs to the inositol polyphosphate 5-phosphatase family. In terms of tissue distribution, expressed ubiquitously.

It carries out the reaction 1D-myo-inositol 1,4,5-trisphosphate + H2O = 1D-myo-inositol 1,4-bisphosphate + phosphate. It catalyses the reaction 1D-myo-inositol 1,3,4,5-tetrakisphosphate + H2O = 1D-myo-inositol 1,3,4-trisphosphate + phosphate. Has phosphatase activity toward Ins(1,4,5)P3 and Ins(1,3,4,5)P4, but not toward Ins(1,4)P2, Ins(1)P. Seems to be involved in the abscisic acid (ABA) signaling pathway. Could also be able to hydrolyze PtdIns(4,5)P2 and PtdIns(3,4,5)P3. This Arabidopsis thaliana (Mouse-ear cress) protein is Type I inositol polyphosphate 5-phosphatase 1.